Here is a 563-residue protein sequence, read N- to C-terminus: GTPase Obg (563 aa).

Positions 2–168 (SDFVDRVTVH…RDVILELKSI (167 aa)) constitute an Obg domain. Residues 169 to 349 (ADVALVGFPS…LNFALSALVH (181 aa)) enclose the OBG-type G domain. Residues 175–182 (GFPSAGKS), 200–204 (FTTLV), 221–224 (DVPG), 301–304 (NKID), and 330–332 (STA) contribute to the GTP site. 2 residues coordinate Mg(2+): serine 182 and threonine 202. Positions 383–469 (DEGGSALEFT…ARMVEFDWDP (87 aa)) constitute an OCT domain. A disordered region spans residues 529–563 (RKAGHWADPTVDDDRHDETSLFGHGESSEDGETEE).

This sequence belongs to the TRAFAC class OBG-HflX-like GTPase superfamily. OBG GTPase family. Monomer. Mg(2+) serves as cofactor.

The protein localises to the cytoplasm. An essential GTPase which binds GTP, GDP and possibly (p)ppGpp with moderate affinity, with high nucleotide exchange rates and a fairly low GTP hydrolysis rate. Plays a role in control of the cell cycle, stress response, ribosome biogenesis and in those bacteria that undergo differentiation, in morphogenesis control. The chain is GTPase Obg from Bifidobacterium longum (strain NCC 2705).